The following is a 1842-amino-acid chain: Vacuolar membrane-associated protein iml1 (1842 aa).

The span at 1–12 shows a compositional bias: basic residues; it reads MALRGPMKRSHL. Disordered stretches follow at residues 1 to 49, 728 to 817, and 887 to 976; these read MALR…ATPD, RRQQ…ARTP, and SLRP…SPQN. The span at 16 to 31 shows a compositional bias: polar residues; sequence SAPSVDSLSVPQSQSP. A compositionally biased stretch (basic and acidic residues) spans 36–49; the sequence is NDEHSHQDVHATPD. Residues 728–738 show a composition bias toward basic residues; the sequence is RRQQRKASRPK. Residues 750–767 are compositionally biased toward basic and acidic residues; sequence AHERLSARSVLRLREHET. Low complexity predominate over residues 797 to 814; that stretch reads PSKTSSPKKPALKAPSAA. Residues 963–976 are compositionally biased toward polar residues; sequence SGGSRESSIKSPQN. The region spanning 1338-1413 is the DEP domain; the sequence is GEKGVRMMDR…DGNYFYQISS (76 aa). Disordered regions lie at residues 1422–1475 and 1822–1842; these read SRGS…KSKN and NDSL…LNMT.

The protein belongs to the IML1 family.

It is found in the vacuole membrane. This is Vacuolar membrane-associated protein iml1 (iml1) from Neosartorya fischeri (strain ATCC 1020 / DSM 3700 / CBS 544.65 / FGSC A1164 / JCM 1740 / NRRL 181 / WB 181) (Aspergillus fischerianus).